The following is a 296-amino-acid chain: Glucokinase (296 aa).

It belongs to the ROK (NagC/XylR) family. As to quaternary structure, homodimer. It depends on a divalent metal cation as a cofactor.

The catalysed reaction is D-glucose + ATP = D-glucose 6-phosphate + ADP + H(+). Catalyzes the phosphorylation of D-glucose to D-glucose 6-phosphate using ATP as the phosphate donor. Has a broad hexose specificity, and in addition to glucose, which shows the highest catalytic efficiency, it can also phosphorylate fructose, mannose, galactose and sorbitol. Can also use CTP, GTP or UTP as phosphoryl donor. The polypeptide is Glucokinase (Pyrobaculum calidifontis (strain DSM 21063 / JCM 11548 / VA1)).